We begin with the raw amino-acid sequence, 239 residues long: Ribosomal RNA small subunit methyltransferase G (239 aa).

Residues Gly-78, Phe-83, 129 to 130, and Arg-148 each bind S-adenosyl-L-methionine; that span reads AE.

It belongs to the methyltransferase superfamily. RNA methyltransferase RsmG family.

The protein localises to the cytoplasm. In terms of biological role, specifically methylates the N7 position of a guanine in 16S rRNA. This Clostridium botulinum (strain Kyoto / Type A2) protein is Ribosomal RNA small subunit methyltransferase G.